The chain runs to 136 residues: Active regulator of SIRT1 (136 aa).

Citrulline is present on arginine 7. The interval leucine 13–serine 58 is disordered. Serine 84 is modified (phosphoserine).

It belongs to the AROS family. Part of the small subunit (SSU) processome, composed of more than 70 proteins and the RNA chaperone small nucleolar RNA (snoRNA) U3. Interacts with RPS19; the interaction is direct and mediates the integration of RPS19 in state post-A1. Interacts with SIRT1. Citrullinated by PADI4. As to expression, widely expressed (at protein level).

It is found in the nucleus. The protein resides in the nucleolus. Its function is as follows. Part of the small subunit (SSU) processome, first precursor of the small eukaryotic ribosomal subunit. During the assembly of the SSU processome in the nucleolus, many ribosome biogenesis factors, an RNA chaperone and ribosomal proteins associate with the nascent pre-rRNA and work in concert to generate RNA folding, modifications, rearrangements and cleavage as well as targeted degradation of pre-ribosomal RNA by the RNA exosome. Acts as a chaperone that specifically mediates the integration of RPS19 in state post-A1. Direct regulator of SIRT1. Enhances SIRT1-mediated deacetylation of p53/TP53, thereby participating in inhibition of p53/TP53-mediated transcriptional activity. In Homo sapiens (Human), this protein is Active regulator of SIRT1.